The sequence spans 497 residues: 4,4'-diaponeurosporene oxygenase (497 aa).

V7–I19 contributes to the FAD binding site.

Belongs to the carotenoid/retinoid oxidoreductase family. CrtP subfamily. It depends on FAD as a cofactor.

The catalysed reaction is all-trans-4,4'-diaponeurosporene + 2 AH2 + 2 O2 = 4,4'-diaponeurosporenal + 2 A + 3 H2O. It functions in the pathway carotenoid biosynthesis; staphyloxanthin biosynthesis; staphyloxanthin from farnesyl diphosphate: step 3/5. Functionally, involved in the biosynthesis of the yellow-orange carotenoid staphyloxanthin, which plays a role in the virulence via its protective function against oxidative stress. Catalyzes the oxidation of the terminal methyl side group of 4,4'-diaponeurosporene to form 4,4'-diaponeurosporen-4-al. This chain is 4,4'-diaponeurosporene oxygenase, found in Staphylococcus aureus (strain USA300).